The sequence spans 674 residues: Transcription activator of gluconeogenesis PMAA_028970 (674 aa).

Residues 1–46 (MMDTDKDDLPSATDHSEHESGDAVKVEGGASKTASNSKDPSRPRRK) are disordered. The segment covering 14–25 (DHSEHESGDAVK) has biased composition (basic and acidic residues). The segment at residues 52 to 80 (CFACQRAHLTCGDERPCQRCIKRGLQDAC) is a DNA-binding region (zn(2)-C6 fungal-type). Disordered regions lie at residues 117–181 (ISPT…ATPA), 250–321 (TGAG…SGLY), 344–374 (IGSNTFASPSSTTSPHATTIAPSQFDDSPMK), and 519–557 (NLNVNTGGGNNTSSQSDSTSSSIRGGAGGRMRNQEPGPN). Positions 120 to 148 (TEYTQNGTNNAQQQQQKSGTIYASSTPSY) are enriched in polar residues. Over residues 149–163 (NNNNGTFDTNNATNT) the composition is skewed to low complexity. Composition is skewed to polar residues over residues 269 to 278 (GQRSNSQQFG) and 285 to 294 (TTESPSQQSF). Low complexity-rich tracts occupy residues 348–366 (TFASPSSTTSPHATTIAPS) and 529–540 (NTSSQSDSTSSS).

The protein belongs to the ERT1/acuK family.

The protein resides in the nucleus. Its function is as follows. Transcription factor which regulates nonfermentable carbon utilization. Activator of gluconeogenetic genes. The protein is Transcription activator of gluconeogenesis PMAA_028970 of Talaromyces marneffei (strain ATCC 18224 / CBS 334.59 / QM 7333) (Penicillium marneffei).